The sequence spans 497 residues: Probable cytosol aminopeptidase (497 aa).

Mn(2+)-binding residues include Lys-267 and Asp-272. Lys-279 is a catalytic residue. Mn(2+)-binding residues include Asp-290, Asp-349, and Glu-351. Arg-353 is a catalytic residue.

This sequence belongs to the peptidase M17 family. Mn(2+) is required as a cofactor.

It localises to the cytoplasm. It carries out the reaction Release of an N-terminal amino acid, Xaa-|-Yaa-, in which Xaa is preferably Leu, but may be other amino acids including Pro although not Arg or Lys, and Yaa may be Pro. Amino acid amides and methyl esters are also readily hydrolyzed, but rates on arylamides are exceedingly low.. It catalyses the reaction Release of an N-terminal amino acid, preferentially leucine, but not glutamic or aspartic acids.. Its function is as follows. Presumably involved in the processing and regular turnover of intracellular proteins. Catalyzes the removal of unsubstituted N-terminal amino acids from various peptides. The sequence is that of Probable cytosol aminopeptidase from Pseudomonas putida (strain GB-1).